Consider the following 361-residue polypeptide: Putative dual-specificity RNA methyltransferase RlmN (361 aa).

Glu91 functions as the Proton acceptor in the catalytic mechanism. The region spanning 97–329 (QHYGLSVCVT…KKKGVNCVVR (233 aa)) is the Radical SAM core domain. Residues Cys111, Cys115, and Cys118 each contribute to the [4Fe-4S] cluster site. Residues 163–164 (GE), Ser195, 218–220 (SLH), and Thr296 each bind S-adenosyl-L-methionine.

Belongs to the radical SAM superfamily. RlmN family. It depends on [4Fe-4S] cluster as a cofactor.

It localises to the cytoplasm. The catalysed reaction is adenosine(2503) in 23S rRNA + 2 reduced [2Fe-2S]-[ferredoxin] + 2 S-adenosyl-L-methionine = 2-methyladenosine(2503) in 23S rRNA + 5'-deoxyadenosine + L-methionine + 2 oxidized [2Fe-2S]-[ferredoxin] + S-adenosyl-L-homocysteine. The enzyme catalyses adenosine(37) in tRNA + 2 reduced [2Fe-2S]-[ferredoxin] + 2 S-adenosyl-L-methionine = 2-methyladenosine(37) in tRNA + 5'-deoxyadenosine + L-methionine + 2 oxidized [2Fe-2S]-[ferredoxin] + S-adenosyl-L-homocysteine. In terms of biological role, specifically methylates position 2 of adenine 2503 in 23S rRNA and position 2 of adenine 37 in tRNAs. This is Putative dual-specificity RNA methyltransferase RlmN from Streptococcus pneumoniae (strain CGSP14).